Reading from the N-terminus, the 1065-residue chain is Bifunctional cytochrome P450/NADPH--P450 reductase (1065 aa).

The tract at residues Met1–Lys479 is cytochrome P450. Cys405 serves as a coordination point for heme. Positions Gln480–Ile1065 are NADPH--P450 reductase. In terms of domain architecture, Flavodoxin-like spans Leu496–Trp635. Residues Ser502–Ala507, Ser549–Gly552, Cys583–Asp585, and Thr591–Gln593 contribute to the FMN site. One can recognise an FAD-binding FR-type domain in the interval Tyr674 to Pro907.

In the N-terminal section; belongs to the cytochrome P450 family. The cofactor is heme. FAD is required as a cofactor. FMN serves as cofactor.

The catalysed reaction is 2 oxidized [cytochrome P450] + NADPH = 2 reduced [cytochrome P450] + NADP(+) + H(+). It catalyses the reaction an organic molecule + reduced [NADPH--hemoprotein reductase] + O2 = an alcohol + oxidized [NADPH--hemoprotein reductase] + H2O + H(+). Its function is as follows. Functions as a fatty acid monooxygenase. Catalyzes hydroxylation of fatty acids at omega-1, omega-2 and omega-3 positions, yielding primarily omega-1 and omega-2 hydroxylated products. Metabolizes unsaturated and saturated fatty acids as well as N-acylamino acids. Has a preference for long-chain unsaturated fatty acids over saturated fatty acids. Shows activity toward saturated fatty acids with a chain length of 9-18 carbons with preference for longer fatty acids. Also displays a NADPH-dependent reductase activity in the C-terminal domain, which allows electron transfer from NADPH to the heme iron of the cytochrome P450 N-terminal domain. The sequence is that of Bifunctional cytochrome P450/NADPH--P450 reductase from Bacillus cereus (strain ATCC 14579 / DSM 31 / CCUG 7414 / JCM 2152 / NBRC 15305 / NCIMB 9373 / NCTC 2599 / NRRL B-3711).